Here is a 318-residue protein sequence, read N- to C-terminus: MKIKQAIDKIPGGLMLVPLFLGALCNTFTPGAGKYLGSFSNGLITGTIPILAVWFFCMGASIELKATGTMLKKSGVLVITKLATAWVVALIAGTFLPGDGIQNGLLAGISVLALVAAMDMTNGGLYAALMNQYGSKEEAGAFVLMSLESGPLMTMVILGASGIATFEPQLFVGAVLPFLIGFTLGNLDPDLRKLFGNSVQTLIPFFAFALGNTINLAVILQTGFAGIFLGVLVIVVTGIPLIIADKFIGGGNGTAGVAASSSAGAAVATPLLIANMAPEFAPVAQQATALVATSVIVTSVLVPVITALWAKRFSPKHA.

10 helical membrane-spanning segments follow: residues 10–30 (IPGG…TFTP), 42–62 (GLIT…GASI), 76–96 (VLVI…GTFL), 105–125 (LLAG…NGGL), 139–159 (AGAF…VILG), 162–182 (GIAT…LIGF), 199–219 (VQTL…LAVI), 224–244 (FAGI…LIIA), 263–283 (AGAA…FAPV), and 289–309 (ALVA…TALW).

Belongs to the KdgT transporter family.

Its subcellular location is the cell inner membrane. It carries out the reaction 2-dehydro-3-deoxy-D-gluconate(in) + H(+)(in) = 2-dehydro-3-deoxy-D-gluconate(out) + H(+)(out). Catalyzes the proton-dependent uptake of 2-keto-3-deoxygluconate (KDG) into the cell. This chain is 2-keto-3-deoxygluconate permease, found in Pectobacterium carotovorum subsp. carotovorum (strain PC1).